Here is an 88-residue protein sequence, read N- to C-terminus: Small ribosomal subunit protein uS17 (88 aa).

It belongs to the universal ribosomal protein uS17 family. Part of the 30S ribosomal subunit.

One of the primary rRNA binding proteins, it binds specifically to the 5'-end of 16S ribosomal RNA. In Hahella chejuensis (strain KCTC 2396), this protein is Small ribosomal subunit protein uS17.